Reading from the N-terminus, the 1531-residue chain is Nuclear factor of activated T-cells 5 (1531 aa).

2 disordered regions span residues 34 to 89 (ELQL…TSSS) and 114 to 141 (VSNR…RHTV). Residues 41-51 (RETSVASMSQT) show a composition bias toward polar residues. Residues 63–89 (VVAADASSAPSSSSMGGACSSFTTSSS) are compositionally biased toward low complexity. The residue at position 120 (Ser-120) is a Phosphoserine. Lys-122 carries the N6-acetyllysine modification. Residues 122 to 134 (KQLTSNTVQQHPS) show a composition bias toward polar residues. Ser-134 is subject to Phosphoserine. A Phosphothreonine; by CDK5 modification is found at Thr-135. At Ser-155 the chain carries Phosphoserine. Disordered regions lie at residues 175–220 (WMED…CEES) and 241–265 (TTDN…GVKK). Residues 179–192 (SPSNFSNMSTSSYN) are compositionally biased toward low complexity. Residues 200–212 (KSRKRNPKQRPGV) are compositionally biased toward basic residues. Residues 241-260 (TTDNKGNSKAGNGTLENQKG) are compositionally biased toward polar residues. An RHD domain is found at 264–443 (KKSPMLCGQY…SPILCTQPAG (180 aa)). Residues 293–300 (RARYLTEG) mediate DNA binding. Lys-556 is covalently cross-linked (Glycyl lysine isopeptide (Lys-Gly) (interchain with G-Cter in SUMO1); alternate). A Glycyl lysine isopeptide (Lys-Gly) (interchain with G-Cter in SUMO2); alternate cross-link involves residue Lys-556. A Phosphoserine modification is found at Ser-561. Glycyl lysine isopeptide (Lys-Gly) (interchain with G-Cter in SUMO2) cross-links involve residues Lys-573 and Lys-603. Disordered stretches follow at residues 640-666 (NIAG…QQIQ), 841-891 (VSPG…QVME), 958-996 (PPAV…TGTQ), 1211-1304 (PQVA…QEQQ), 1316-1371 (APMN…QEQQ), and 1473-1502 (ISQP…SPLA). A compositionally biased stretch (low complexity) spans 646-656 (SFSSPSSSHLP). Polar residues-rich tracts occupy residues 841-852 (VSPGMFSSTEPT) and 869-878 (HPQSENTLSN). Composition is skewed to low complexity over residues 879–888 (QQQQQQQQQQ) and 960–980 (AVSG…PGTT). Composition is skewed to polar residues over residues 981-996 (MFQT…TGTQ) and 1224-1247 (PQSQ…NSPS). A compositionally biased stretch (low complexity) spans 1248 to 1266 (QEQQQQQQQQQQQQQQQQQ). 2 stretches are compositionally biased toward polar residues: residues 1267 to 1278 (SILFSNQNTMAT) and 1291 to 1304 (FNPN…QEQQ). Residues 1320 to 1330 (QEQQPMQFQSQ) are compositionally biased toward low complexity. A compositionally biased stretch (polar residues) spans 1331-1371 (STVSSLQNPGPTQSESSQTPLFHSSPQIQLVQGSPSSQEQQ). The span at 1475–1486 (QPGQPQNEGQPP) shows a compositional bias: low complexity. Over residues 1487-1502 (VTTLLSQQMPENSPLA) the composition is skewed to polar residues.

As to quaternary structure, homodimer when bound to DNA, completely encircles its DNA target. Interacts with CIDEC; this interaction is direct and retains NFAT5 in the cytoplasm. Does not bind with Fos and Jun transcription factors. Interacts with DDX5 and DDX17; this interaction leads to DDX5/DDX17 recruitment to LNC2 and S100A4 promoters and NFAT5-mediated DDX5/DDX17-enhanced transactivation. In terms of processing, phosphorylated. Phosphorylated at Thr-135 by CDK5 in response to osmotic stress; this phosphorylation mediates its rapid nuclear localization. Post-translationally, poly-ADP-ribosylated by PARP1 in response to DNA damage, promoting recruitment to sites of R-loop-associated DNA damage. In terms of tissue distribution, widely expressed, with highest levels in skeletal muscle, brain, heart and peripheral blood leukocytes.

Its subcellular location is the nucleus. The protein localises to the cytoplasm. It is found in the chromosome. In terms of biological role, transcription factor involved, among others, in the transcriptional regulation of osmoprotective and inflammatory genes. Binds the DNA consensus sequence 5'-[ACT][AG]TGGAAA[CAT]A[TA][ATC][CA][ATG][GT][GAC][CG][CT]-3'. Mediates the transcriptional response to hypertonicity. Positively regulates the transcription of LCN2 and S100A4 genes; optimal transactivation of these genes requires the presence of DDX5/DDX17. Also involved in the DNA damage response by preventing formation of R-loops; R-loops are composed of a DNA:RNA hybrid and the associated non-template single-stranded DNA. This is Nuclear factor of activated T-cells 5 from Homo sapiens (Human).